A 451-amino-acid chain; its full sequence is uncharacterized protein (451 aa).

The next 11 helical transmembrane spans lie at 13–33, 41–61, 97–117, 142–162, 174–194, 217–237, 255–275, 299–319, 345–365, 381–401, and 429–449; these read IGFV…WKFP, GGAF…PLLV, ACFL…LYIV, NPVQ…LVVA, AVMM…SLTL, ILFA…VMVT, IVLM…PAVF, LPFG…AALT, WTSG…YGVL, FTVS…FIPL, and LLRF…IGIL.

It belongs to the sodium:neurotransmitter symporter (SNF) (TC 2.A.22) family.

The protein resides in the cell membrane. Its function is as follows. Putative sodium-dependent transporter. This is an uncharacterized protein from Bacillus subtilis (strain 168).